The chain runs to 116 residues: Putative iron-sulfur cluster insertion protein ErpA (116 aa).

Residues Cys-44, Cys-108, and Cys-110 each contribute to the iron-sulfur cluster site.

It belongs to the HesB/IscA family. Homodimer. Iron-sulfur cluster is required as a cofactor.

Required for insertion of 4Fe-4S clusters. The chain is Putative iron-sulfur cluster insertion protein ErpA from Azoarcus sp. (strain BH72).